The primary structure comprises 372 residues: GTPase Obg (372 aa).

The region spanning 1–159 (MKFIDEARIE…RMLKLELKVL (159 aa)) is the Obg domain. The segment at 128–147 (LHFKSSTNRAPRQKTDGKPG) is disordered. In terms of domain architecture, OBG-type G spans 160 to 334 (ADVGLLGMPN…LVYAIYDYLA (175 aa)). GTP contacts are provided by residues 166–173 (GMPNAGKS), 191–195 (FTTLA), 213–216 (DIPG), 284–287 (NKLD), and 315–317 (SAL). The Mg(2+) site is built by Ser-173 and Thr-193.

The protein belongs to the TRAFAC class OBG-HflX-like GTPase superfamily. OBG GTPase family. In terms of assembly, monomer. Requires Mg(2+) as cofactor.

The protein resides in the cytoplasm. In terms of biological role, an essential GTPase which binds GTP, GDP and possibly (p)ppGpp with moderate affinity, with high nucleotide exchange rates and a fairly low GTP hydrolysis rate. Plays a role in control of the cell cycle, stress response, ribosome biogenesis and in those bacteria that undergo differentiation, in morphogenesis control. This is GTPase Obg from Burkholderia thailandensis (strain ATCC 700388 / DSM 13276 / CCUG 48851 / CIP 106301 / E264).